Reading from the N-terminus, the 282-residue chain is ATP synthase gamma chain (282 aa).

The protein belongs to the ATPase gamma chain family. As to quaternary structure, F-type ATPases have 2 components, CF(1) - the catalytic core - and CF(0) - the membrane proton channel. CF(1) has five subunits: alpha(3), beta(3), gamma(1), delta(1), epsilon(1). CF(0) has three main subunits: a, b and c.

It is found in the cell membrane. Produces ATP from ADP in the presence of a proton gradient across the membrane. The gamma chain is believed to be important in regulating ATPase activity and the flow of protons through the CF(0) complex. The protein is ATP synthase gamma chain of Clostridium acetobutylicum (strain ATCC 824 / DSM 792 / JCM 1419 / IAM 19013 / LMG 5710 / NBRC 13948 / NRRL B-527 / VKM B-1787 / 2291 / W).